The following is a 393-amino-acid chain: Probable N-acetyl-LL-diaminopimelate aminotransferase (393 aa).

Lys-231 carries the N6-(pyridoxal phosphate)lysine modification.

This sequence belongs to the class-I pyridoxal-phosphate-dependent aminotransferase family. Homodimer. Pyridoxal 5'-phosphate serves as cofactor.

It is found in the cytoplasm. It catalyses the reaction N-acetyl-(2S,6S)-2,6-diaminopimelate + 2-oxoglutarate = L-2-acetamido-6-oxoheptanedioate + L-glutamate. It functions in the pathway amino-acid biosynthesis; L-lysine biosynthesis via DAP pathway; LL-2,6-diaminopimelate from (S)-tetrahydrodipicolinate (acetylase route): step 2/3. Its function is as follows. Essential for murein biosynthesis. Probably catalyzes the conversion of L-2-acetamido-6-oxopimelate to N-acetyl-LL-2,6-diaminopimelate. This Bacillus subtilis (strain 168) protein is Probable N-acetyl-LL-diaminopimelate aminotransferase.